A 393-amino-acid chain; its full sequence is Formate-dependent phosphoribosylglycinamide formyltransferase (393 aa).

Residues 22 to 23 (EL) and glutamate 82 contribute to the N(1)-(5-phospho-beta-D-ribosyl)glycinamide site. Residues arginine 114, lysine 155, 160–165 (SSGKGQ), 195–198 (EGFI), and glutamate 203 each bind ATP. An ATP-grasp domain is found at 119 to 308 (RLAAEELDLP…QFALHARAIL (190 aa)). Residues glutamate 267 and glutamate 279 each coordinate Mg(2+). Residues aspartate 286, lysine 356, and 363–364 (RR) each bind N(1)-(5-phospho-beta-D-ribosyl)glycinamide.

It belongs to the PurK/PurT family. In terms of assembly, homodimer.

It catalyses the reaction N(1)-(5-phospho-beta-D-ribosyl)glycinamide + formate + ATP = N(2)-formyl-N(1)-(5-phospho-beta-D-ribosyl)glycinamide + ADP + phosphate + H(+). The protein operates within purine metabolism; IMP biosynthesis via de novo pathway; N(2)-formyl-N(1)-(5-phospho-D-ribosyl)glycinamide from N(1)-(5-phospho-D-ribosyl)glycinamide (formate route): step 1/1. In terms of biological role, involved in the de novo purine biosynthesis. Catalyzes the transfer of formate to 5-phospho-ribosyl-glycinamide (GAR), producing 5-phospho-ribosyl-N-formylglycinamide (FGAR). Formate is provided by PurU via hydrolysis of 10-formyl-tetrahydrofolate. This is Formate-dependent phosphoribosylglycinamide formyltransferase from Pseudomonas putida (strain W619).